The sequence spans 122 residues: Large ribosomal subunit protein bL12 (122 aa).

Belongs to the bacterial ribosomal protein bL12 family. Homodimer. Part of the ribosomal stalk of the 50S ribosomal subunit. Forms a multimeric L10(L12)X complex, where L10 forms an elongated spine to which 2 to 4 L12 dimers bind in a sequential fashion. Binds GTP-bound translation factors.

In terms of biological role, forms part of the ribosomal stalk which helps the ribosome interact with GTP-bound translation factors. Is thus essential for accurate translation. The sequence is that of Large ribosomal subunit protein bL12 from Acinetobacter baumannii (strain AB0057).